The primary structure comprises 540 residues: Lysosomal cobalamin transport escort protein LMBD1 (540 aa).

The Extracellular segment spans residues 1-10; sequence MATPGAASAE. A helical membrane pass occupies residues 11–31; it reads LVIGWCIFGLLLLAILAFCWI. The Cytoplasmic portion of the chain corresponds to 32 to 50; that stretch reads YVRKYQSRRESEVVSTITA. The helical transmembrane segment at 51–71 threads the bilayer; it reads IFSLAIALITSALLPVDIFLV. Topologically, residues 72–100 are extracellular; the sequence is SYMKNQNGTFKDWANANVSRQIEDTVLYG. Residues asparagine 78 and asparagine 88 are each glycosylated (N-linked (GlcNAc...) asparagine). A helical transmembrane segment spans residues 101–121; that stretch reads YYTLYSVILFCVFFWIPFVYF. Topologically, residues 122 to 144 are cytoplasmic; the sequence is YYEEKDDDDTSKCTQIKTALKYT. The helical transmembrane segment at 145 to 165 threads the bilayer; it reads LGFVVICALLLLVGAFVPLNV. At 166-188 the chain is on the extracellular side; sequence PNNKNSTEWEKVKFLFEELGSSH. N-linked (GlcNAc...) asparagine glycosylation occurs at asparagine 170. Residues 189-209 traverse the membrane as a helical segment; that stretch reads GLAALSFSISSLTLIGMLAAI. The Cytoplasmic segment spans residues 210 to 305; it reads TYTAYGMSAL…KFCGALRPLK (96 aa). The YERL motif; mediates interaction with adapter protein complex 2 and is essential for its function in clathrin-mediated endocytosis of INSR signature appears at 232–235; the sequence is YERL. Threonine 238 is subject to Phosphothreonine. The WTKF motif; mediates interaction with adapter protein complex 2 and is essential for its function in clathrin-mediated endocytosis of INSR signature appears at 294–297; it reads WTKF. Residues 306–326 traverse the membrane as a helical segment; it reads IIWGIFFILVALLFVISLFLS. Residues 327–364 are Extracellular-facing; sequence NLDKALHSAGIDSGFIIFGANLSNPLNMLLPLLQTVFP. A glycan (N-linked (GlcNAc...) asparagine) is linked at asparagine 347. Residues 365-385 traverse the membrane as a helical segment; that stretch reads LDYILITIIIMYFIFTSMAGI. The Cytoplasmic portion of the chain corresponds to 386–408; that stretch reads RNIGIWFFWIRLYKIRRGRTRPQ. A helical transmembrane segment spans residues 409-429; it reads ALLFLCMILLLIVLHTSYMIY. The Extracellular segment spans residues 430-486; the sequence is SLAPQYVMYGSQNYLIETNITSDNHKGNSTLSVPKRCDADAPEDQCTVTRTYLFLHK. 2 N-linked (GlcNAc...) asparagine glycosylation sites follow: asparagine 448 and asparagine 457. The chain crosses the membrane as a helical span at residues 487 to 507; it reads FWFFSAAYYFGNWAFLGVFLI. The Cytoplasmic segment spans residues 508–540; it reads GLIVSCCKGKKSVIEGVDEDSDISDDEPSVYSV. Phosphoserine is present on residues serine 528 and serine 531.

This sequence belongs to the LIMR family. LMBRD1 subfamily. Interacts with ABCD4; this interaction induces the translocation of ABCD4 from the endoplasmic reticulum to the lysosome. Interacts with ABCD4 and MMACHC; this interaction ensures the transport of cobalamin from the lysosome to the cytoplasm. Interacts with INSR, adapter protein complex 2 and clathrin heavy chain. In terms of processing, N-glycosylated.

Its subcellular location is the lysosome membrane. It localises to the cell membrane. The protein resides in the cytoplasmic vesicle. The protein localises to the clathrin-coated vesicle. In terms of biological role, lysosomal membrane chaperone required to export cobalamin (vitamin B12) from lysosome to the cytosol, allowing its conversion to cofactors. Targets ABCD4 transporter from the endoplasmic reticulum to the lysosomal membrane. Then forms a complex with lysosomal transporter ABCD4 and cytoplasmic MMACHC to transport cobalamin across the lysosomal membrane. Acts as an adapter protein which plays an important role in mediating and regulating the internalization of the insulin receptor (INSR). Involved in clathrin-mediated endocytosis of INSR via its interaction with adapter protein complex 2. Essential for the initiation of gastrulation and early formation of mesoderm structures during embryogenesis. This is Lysosomal cobalamin transport escort protein LMBD1 (LMBRD1) from Macaca fascicularis (Crab-eating macaque).